Here is a 442-residue protein sequence, read N- to C-terminus: Probable carboxypeptidase PABG_01461 (442 aa).

Positions 1 to 20 (MKLQYLVALLSVQAVPPVTA) are cleaved as a signal peptide. Asn-102 carries N-linked (GlcNAc...) asparagine glycosylation. Asp-160 contacts Zn(2+). The Proton acceptor role is filled by Glu-192. Glu-193 provides a ligand contact to Zn(2+). A glycan (N-linked (GlcNAc...) asparagine) is linked at Asn-343.

The protein belongs to the peptidase M20A family. Requires Zn(2+) as cofactor.

It localises to the secreted. This Paracoccidioides brasiliensis (strain Pb03) protein is Probable carboxypeptidase PABG_01461.